A 593-amino-acid chain; its full sequence is MDTTIDGFADSYEISSTSFVATDNTDSSIVYLAAEQVLTGPDVSALQLLSNSFESVFDSPDDFYSDAKLVLSDGREVSFHRCVLSARSSFFKSALAAAKKEKDSNNTAAVKLELKEIAKDYEVGFDSVVTVLAYVYSSRVRPPPKGVSECADENCCHVACRPAVDFMLEVLYLAFIFKIPELITLYQRHLLDVVDKVVIEDTLVILKLANICGKACMKLLDRCKEIIVKSNVDMVSLEKSLPEELVKEIIDRRKELGLEVPKVKKHVSNVHKALDSDDIELVKLLLKEDHTNLDDACALHFAVAYCNVKTATDLLKLDLADVNHRNPRGYTVLHVAAMRKEPQLILSLLEKGASASEATLEGRTALMIAKQATMAVECNNIPEQCKHSLKGRLCVEILEQEDKREQIPRDVPPSFAVAADELKMTLLDLENRVALAQRLFPTEAQAAMEIAEMKGTCEFIVTSLEPDRLTGTKRTSPGVKIAPFRILEEHQSRLKALSKTVELGKRFFPRCSAVLDQIMNCEDLTQLACGEDDTAEKRLQKKQRYMEIQETLKKAFSEDNLELGNSSLTDSTSSTSKSTGGKRSNRKLSHRRR.

A phosphoserine mark is found at serine 11, serine 15, serine 55, and serine 59. The region spanning 65–144 (SDAKLVLSDG…VYSSRVRPPP (80 aa)) is the BTB domain. Residues 147–161 (VSECADENCCHVACR) form a C2HC NPR-type zinc finger. Zn(2+) is bound by residues cysteine 150 and cysteine 155. Cysteine 156 bears the S-nitrosocysteine mark. Positions 157 and 160 each coordinate Zn(2+). ANK repeat units follow at residues 229 to 258 (KSNV…ELGL), 265 to 295 (KHVS…NLDD), 297 to 324 (CALH…DVNH), 328 to 357 (RGYT…SASE), and 361 to 397 (EGRT…CVEI). The SIM3, required fo binding to SUMO3 and subsequent sumoylation signature appears at 345–348 (ILSL). A salicylic acid-binding core (SBC) region spans residues 387 to 525 (HSLKGRLCVE…DQIMNCEDLT (139 aa)). Residue arginine 432 participates in salicylate binding. The Nuclear localization signal signature appears at 537–554 (KRLQKKQRYMEIQETLKK). The interval 563 to 593 (LGNSSLTDSTSSTSKSTGGKRSNRKLSHRRR) is disordered. Low complexity predominate over residues 566–579 (SSLTDSTSSTSKST). The span at 583–593 (RSNRKLSHRRR) shows a compositional bias: basic residues.

The protein belongs to the plant 'ANKYRIN-BTB/POZ' family. 'NPR1-like' subfamily. Homodimer. Oligomer of dimers in an uninduced quiescent state; disulfide-linked. Forms activated (i.e. sumoylated) homodimers and monomers upon systemic acquired resistance (SAR) induction. Interacts with TGA1, TGA3, TGA4, TGA5, TGA6, TGA7 and with reduced forms of TGA1 and TGA4. Activated homodimer binds two TGA3 dimers in the presence of DNA via its ANK 2 repeat (265-295), thus forming a TGA3(2)-NPR1(2)-TGA3(2) complex in which NPR1 serves as a transcription cofactor by bridging two transcription factor complexes in an enhanceosome. Interacts with NIMIN-1 and NIMIN-3 via its C-terminal region, and with NIMIN-2 via its N-terminal region. Interacts with SUMO3 but not with SUMO1 and SUMO2; this interaction is required for phosphorylation at Ser-11 and Ser-15, and triggers activation by sumoylation and subsequent degradation. Binds to NPR3 and NPR4; these interactions are promoted by association of salicylic acid (SA) with NPR3, but disrupted by SA association with NPR4, probably due to conformational changes. Binds to CUL3A, a core component of the cullin-RING ubiquitin ligases (CRL); this interaction requires NPR3 and NPR4. Interacts with NPR2 independently of SA. Binds to WRKY70 when unmodified (i.e. not sumoylated). Post-translationally, phosphorylation at Ser-55 and Ser-59 prevents sumoylation to ensure stability and quiescence. In terms of processing, phosphorylated at Ser-11 and Ser-15 in the nucleus; facilitates its recruitment to a cullin3-based ubiquitin ligase leading to polyubiquitination and subsequent CUL3/CSN-mediated degradation. This phosphorylation at Ser-11 and Ser-15 requires interaction with SUMO3, and promotes in turn activation by sumoylation and subsequent degradation. Ubiquitinated. Post-translationally, sumoylated by SUMO3 independently of an E3 ligase to activate defense gene expression by switching from association with WRKY transcriptional repressors (e.g. WRKY70) to TGA transcriptional activators (e.g. TGA3). Sumoylation is inhibited by phosphorylation at Ser-55 and Ser-59, but seems to promote phosphorylation at Ser-11 and Ser-15. Sumoylation also triggers degradation, making immune induction transient. In terms of processing, the Cys-82-SH group reacts with Cys-216-SH of the other subunit to form an intermolecular disulfide. This disulfide might subsequently be reduced upon systemic acquired resistance (SAR) induction. S-nitrosylation at Cys-156 facilitates its oligomerization.

The protein resides in the cytoplasm. It is found in the nucleus. The protein localises to the nuclear body. The protein operates within protein modification; protein ubiquitination. Its function is as follows. Salicylic acid (SA)-binding substrate-specific adapter of an E3 ubiquitin-protein ligase complex (CUL3-RBX1-BTB) which mediates the ubiquitination and subsequent proteasomal degradation of target proteins. Transcription cofactor that represses gene expression in the absence of salicylic acid (SA), when attached to negative cis-elements (W-box) with WRKY transcription factors (e.g. WRKY70), but stimulates gene expression upon activation by SA, when sumoylated and attached to positive cis-elements (as-1) with TGA transcription factors (e.g. TGA3), thus confering immunity through a series of gene regulations ending in a significant increase in antimicrobial and defense genes expression (e.g. PR-1 and PR-2). Binds to SA with low capacity; this leads to conformational changes. Key positive regulator of the SA-dependent signaling pathway that negatively regulates jasmonic acid (JA)-dependent signaling pathway. Controls the onset of systemic acquired resistance (SAR). Upon SAR induction, a biphasic change in cellular reduction potential occurs, resulting in reduction of the cytoplasmic oligomeric form to dimeric and monomeric forms, which accumulate in the nucleus and activate gene expression. Appears to control lesion expansion by acting as an inhibitor of programmed cell death (PCD) during effector-triggered immunity (ETI) that occurs in response to incompatible interaction with avirulent pathogenic bacteria (i.e. Pseudomonas syringae ES4326/avrRpt2) ending in a hypersensitive response (HR). Phosphorylated form is target of proteasome degradation. In Arabidopsis thaliana (Mouse-ear cress), this protein is Regulatory protein NPR1.